Reading from the N-terminus, the 580-residue chain is Glutamine--tRNA ligase (580 aa).

The 'HIGH' region motif lies at 41-51 (PEPNGYLHIGH). ATP-binding positions include 42–44 (EPN) and 48–54 (HIGHAKA). L-glutamine-binding residues include Asp-74 and Tyr-218. ATP-binding positions include Thr-237, 285–286 (RL), and 293–295 (MSK). Positions 292–296 (VMSKR) match the 'KMSKS' region motif.

The protein belongs to the class-I aminoacyl-tRNA synthetase family. Monomer.

Its subcellular location is the cytoplasm. It carries out the reaction tRNA(Gln) + L-glutamine + ATP = L-glutaminyl-tRNA(Gln) + AMP + diphosphate. The polypeptide is Glutamine--tRNA ligase (Xylella fastidiosa (strain Temecula1 / ATCC 700964)).